Here is a 233-residue protein sequence, read N- to C-terminus: Synaptogyrin-1 (233 aa).

The residue at position 1 (M1) is an N-acetylmethionine. Residues 1–23 are Cytoplasmic-facing; sequence MEGGAYGAGKAGGAFDPYTLVRQ. The MARVEL domain occupies 20–173; sequence LVRQPHTILR…QAVLAFQRYQ (154 aa). A helical transmembrane segment spans residues 24 to 44; that stretch reads PHTILRVVSWLFSIVVFGSIV. Residues 45–71 lie on the Lumenal side of the membrane; it reads NEGYLNSASEGEEFCIYNRNPNACSYG. A helical transmembrane segment spans residues 72–92; that stretch reads VAVGVLAFLTCLLYLALDVYF. At 93–103 the chain is on the cytoplasmic side; sequence PQISSVKDRKK. Residues 104 to 124 traverse the membrane as a helical segment; that stretch reads AVLSDIGVSAFWAFLWFVGFC. Topologically, residues 125 to 148 are lumenal; sequence YLANQWQVSKPKDNPLNEGTDAAR. The helical transmembrane segment at 149–169 threads the bilayer; it reads AAIAFSFFSIFTWAGQAVLAF. Residues 170–233 are Cytoplasmic-facing; the sequence is QRYQIGADSA…EPQGYQSQGY (64 aa). The segment at 194–233 is disordered; that stretch reads MPYAPYVEPTGPDPAGMGGTYQQPANTFDTEPQGYQSQGY. Residues 213 to 233 are compositionally biased toward polar residues; it reads TYQQPANTFDTEPQGYQSQGY.

This sequence belongs to the synaptogyrin family.

Its subcellular location is the cytoplasmic vesicle. The protein localises to the secretory vesicle. It is found in the synaptic vesicle membrane. The protein resides in the melanosome. In terms of biological role, may play a role in regulated exocytosis. Modulates the localization of synaptophysin/SYP into synaptic-like microvesicles and may therefore play a role in synaptic-like microvesicle formation and/or maturation. Involved in the regulation of short-term and long-term synaptic plasticity. The sequence is that of Synaptogyrin-1 from Homo sapiens (Human).